The primary structure comprises 397 residues: Riboflavin biosynthesis protein RibBA (397 aa).

The segment at 1 to 199 (MFHRIEEALE…IEDLIAYRRH (199 aa)) is DHBP synthase. Residues 26 to 27 (RE), aspartate 31, 138 to 142 (RAGHT), and glutamate 162 each bind D-ribulose 5-phosphate. Glutamate 27 is a Mg(2+) binding site. Residue histidine 141 participates in Mg(2+) binding. A GTP cyclohydrolase II region spans residues 200 to 397 (HETLVTREVE…VNKLGHLLNL (198 aa)). 250 to 254 (RVHSE) provides a ligand contact to GTP. Residues cysteine 255, cysteine 266, and cysteine 268 each contribute to the Zn(2+) site. GTP contacts are provided by residues glutamine 271, 293–295 (EGR), and threonine 315. The active-site Proton acceptor; for GTP cyclohydrolase activity is aspartate 327. The active-site Nucleophile; for GTP cyclohydrolase activity is the arginine 329. 2 residues coordinate GTP: threonine 350 and lysine 355.

The protein in the N-terminal section; belongs to the DHBP synthase family. It in the C-terminal section; belongs to the GTP cyclohydrolase II family. It depends on Mg(2+) as a cofactor. Mn(2+) is required as a cofactor. Requires Zn(2+) as cofactor.

It catalyses the reaction D-ribulose 5-phosphate = (2S)-2-hydroxy-3-oxobutyl phosphate + formate + H(+). The catalysed reaction is GTP + 4 H2O = 2,5-diamino-6-hydroxy-4-(5-phosphoribosylamino)-pyrimidine + formate + 2 phosphate + 3 H(+). It functions in the pathway cofactor biosynthesis; riboflavin biosynthesis; 2-hydroxy-3-oxobutyl phosphate from D-ribulose 5-phosphate: step 1/1. The protein operates within cofactor biosynthesis; riboflavin biosynthesis; 5-amino-6-(D-ribitylamino)uracil from GTP: step 1/4. In terms of biological role, catalyzes the conversion of D-ribulose 5-phosphate to formate and 3,4-dihydroxy-2-butanone 4-phosphate. Functionally, catalyzes the conversion of GTP to 2,5-diamino-6-ribosylamino-4(3H)-pyrimidinone 5'-phosphate (DARP), formate and pyrophosphate. The polypeptide is Riboflavin biosynthesis protein RibBA (Bacillus cereus (strain B4264)).